The primary structure comprises 119 residues: Basic phospholipase A2 (119 aa).

7 disulfides stabilise this stretch: Cys-11–Cys-71, Cys-27–Cys-118, Cys-29–Cys-45, Cys-44–Cys-99, Cys-51–Cys-92, Cys-60–Cys-85, and Cys-78–Cys-90. Ca(2+) is bound by residues Tyr-28, Gly-30, and Gly-32. His-48 is a catalytic residue. A Ca(2+)-binding site is contributed by Asp-49. Residue Asp-93 is part of the active site.

It belongs to the phospholipase A2 family. Group I subfamily. D49 sub-subfamily. Ca(2+) is required as a cofactor. In terms of tissue distribution, expressed by the venom gland.

It localises to the secreted. It carries out the reaction a 1,2-diacyl-sn-glycero-3-phosphocholine + H2O = a 1-acyl-sn-glycero-3-phosphocholine + a fatty acid + H(+). Its function is as follows. Snake venom phospholipase A2 (PLA2) that has several activities. It is myotoxic, has weak anticoagulant activity and inhibits neuromuscular transmission by blocking acetylcholine release from the nerve termini. PLA2 catalyzes the calcium-dependent hydrolysis of the 2-acyl groups in 3-sn-phosphoglycerides. This is Basic phospholipase A2 from Hydrophis schistosus (Beaked sea snake).